Consider the following 333-residue polypeptide: Adenosine deaminase (333 aa).

Residues histidine 12 and histidine 14 each contribute to the Zn(2+) site. Residues histidine 14, aspartate 16, and glycine 170 each contribute to the substrate site. Histidine 197 contacts Zn(2+). The active-site Proton donor is glutamate 200. Residue aspartate 278 coordinates Zn(2+). Aspartate 279 serves as a coordination point for substrate.

It belongs to the metallo-dependent hydrolases superfamily. Adenosine and AMP deaminases family. Adenosine deaminase subfamily. Requires Zn(2+) as cofactor.

The catalysed reaction is adenosine + H2O + H(+) = inosine + NH4(+). It carries out the reaction 2'-deoxyadenosine + H2O + H(+) = 2'-deoxyinosine + NH4(+). Catalyzes the hydrolytic deamination of adenosine and 2-deoxyadenosine. This is Adenosine deaminase from Aliivibrio fischeri (strain ATCC 700601 / ES114) (Vibrio fischeri).